A 478-amino-acid polypeptide reads, in one-letter code: Dihydrolipoyl dehydrogenase (478 aa).

FAD is bound by residues 34-49 (EKYI…GGTC), Lys-58, and Gly-122. Cys-49 and Cys-54 are oxidised to a cystine. Residues 188–192 (GAGVI), Glu-211, Val-245, and 276–279 (AVGR) each bind NAD(+). Asp-319 and Ala-327 together coordinate FAD. His-451 functions as the Proton acceptor in the catalytic mechanism.

Belongs to the class-I pyridine nucleotide-disulfide oxidoreductase family. Homodimer. It depends on FAD as a cofactor.

It is found in the cytoplasm. The enzyme catalyses N(6)-[(R)-dihydrolipoyl]-L-lysyl-[protein] + NAD(+) = N(6)-[(R)-lipoyl]-L-lysyl-[protein] + NADH + H(+). Functionally, the branched-chain alpha-keto dehydrogenase complex catalyzes the overall conversion of alpha-keto acids to acyl-CoA and CO(2). It contains multiple copies of 3 enzymatic components: branched-chain alpha-keto acid decarboxylase (E1), lipoamide acyltransferase (E2) and lipoamide dehydrogenase (E3). The protein is Dihydrolipoyl dehydrogenase (lpd) of Pseudomonas fluorescens.